Here is a 722-residue protein sequence, read N- to C-terminus: Mating-type switching protein swi2 (722 aa).

Disordered stretches follow at residues Met1 to Ser35 and Ser301 to Ser342. Residues Ser9–Asn22 are compositionally biased toward polar residues. Residues Glu302–Pro316 are compositionally biased toward acidic residues. The segment covering Thr319–Pro332 has biased composition (polar residues).

In terms of assembly, interacts with swi5 and rhp51.

In terms of biological role, required for normal mating-type switching. This is Mating-type switching protein swi2 (swi2) from Schizosaccharomyces pombe (strain 972 / ATCC 24843) (Fission yeast).